The chain runs to 488 residues: ATP synthase subunit beta (488 aa).

155–162 (GGAGVGKT) provides a ligand contact to ATP. The tract at residues 467–488 (GFAPDDQNTDADEKPAAQAAAN) is disordered.

Belongs to the ATPase alpha/beta chains family. In terms of assembly, F-type ATPases have 2 components, CF(1) - the catalytic core - and CF(0) - the membrane proton channel. CF(1) has five subunits: alpha(3), beta(3), gamma(1), delta(1), epsilon(1). CF(0) has three main subunits: a(1), b(2) and c(9-12). The alpha and beta chains form an alternating ring which encloses part of the gamma chain. CF(1) is attached to CF(0) by a central stalk formed by the gamma and epsilon chains, while a peripheral stalk is formed by the delta and b chains.

It is found in the cell membrane. The enzyme catalyses ATP + H2O + 4 H(+)(in) = ADP + phosphate + 5 H(+)(out). Functionally, produces ATP from ADP in the presence of a proton gradient across the membrane. The catalytic sites are hosted primarily by the beta subunits. The polypeptide is ATP synthase subunit beta (Lacticaseibacillus casei (strain BL23) (Lactobacillus casei)).